Here is a 134-residue protein sequence, read N- to C-terminus: MGRDTIADIITSIRNVDMDRKVTVRIASTNITENIVKILLREGFIENVRKHQESNKYFLVLTLRHRRNRKGTYRTILNLKRISRPGLRIYSNYQRIPRILGGMGIVILSTSRGIMTDREARLERIGGEILCYIW.

It belongs to the universal ribosomal protein uS8 family. Part of the 30S ribosomal subunit.

The protein localises to the plastid. It localises to the chloroplast. Its function is as follows. One of the primary rRNA binding proteins, it binds directly to 16S rRNA central domain where it helps coordinate assembly of the platform of the 30S subunit. The protein is Small ribosomal subunit protein uS8c (rps8) of Vitis vinifera (Grape).